The sequence spans 101 residues: Urease subunit beta (101 aa).

Belongs to the urease beta subunit family. In terms of assembly, heterotrimer of UreA (gamma), UreB (beta) and UreC (alpha) subunits. Three heterotrimers associate to form the active enzyme.

Its subcellular location is the cytoplasm. It carries out the reaction urea + 2 H2O + H(+) = hydrogencarbonate + 2 NH4(+). Its pathway is nitrogen metabolism; urea degradation; CO(2) and NH(3) from urea (urease route): step 1/1. This Verminephrobacter eiseniae (strain EF01-2) protein is Urease subunit beta.